A 152-amino-acid polypeptide reads, in one-letter code: D-aminoacyl-tRNA deacylase (152 aa).

The Gly-cisPro motif, important for rejection of L-amino acids motif lies at 142–143 (GP).

This sequence belongs to the DTD family. As to quaternary structure, homodimer.

It is found in the cytoplasm. It catalyses the reaction glycyl-tRNA(Ala) + H2O = tRNA(Ala) + glycine + H(+). The enzyme catalyses a D-aminoacyl-tRNA + H2O = a tRNA + a D-alpha-amino acid + H(+). Its function is as follows. An aminoacyl-tRNA editing enzyme that deacylates mischarged D-aminoacyl-tRNAs. Also deacylates mischarged glycyl-tRNA(Ala), protecting cells against glycine mischarging by AlaRS. Acts via tRNA-based rather than protein-based catalysis; rejects L-amino acids rather than detecting D-amino acids in the active site. By recycling D-aminoacyl-tRNA to D-amino acids and free tRNA molecules, this enzyme counteracts the toxicity associated with the formation of D-aminoacyl-tRNA entities in vivo and helps enforce protein L-homochirality. The protein is D-aminoacyl-tRNA deacylase of Burkholderia mallei (strain NCTC 10247).